The sequence spans 321 residues: Ribonuclease Z (321 aa).

Zn(2+)-binding residues include His62, His64, Asp66, His67, His139, Asp209, and His268. Residue Asp66 is the Proton acceptor of the active site.

Belongs to the RNase Z family. Homodimer. Requires Zn(2+) as cofactor.

It carries out the reaction Endonucleolytic cleavage of RNA, removing extra 3' nucleotides from tRNA precursor, generating 3' termini of tRNAs. A 3'-hydroxy group is left at the tRNA terminus and a 5'-phosphoryl group is left at the trailer molecule.. Functionally, zinc phosphodiesterase, which displays some tRNA 3'-processing endonuclease activity. Probably involved in tRNA maturation, by removing a 3'-trailer from precursor tRNA. This Pseudomonas putida (strain W619) protein is Ribonuclease Z.